A 225-amino-acid polypeptide reads, in one-letter code: Transmembrane protein 225 (225 aa).

Residues 1–8 (MVHVSNRS) are Cytoplasmic-facing. The chain crosses the membrane as a helical span at residues 9–29 (IQGMNILFSSWAVVLMVMGIT). Residues 30-72 (LDKWVELISEDERAKMNHSPWMMCCPALWPEDDLKVVRIMMTS) are Extracellular-facing. A helical transmembrane segment spans residues 73–93 (SLGLSFLLNLILGMKFTYLIP). Residues 94-99 (QNKYIQ) lie on the Cytoplasmic side of the membrane. The helical transmembrane segment at 100–120 (LFTTILSFFSGISLLWALILY) threads the bilayer. At 121–136 (HNKLKQGQSMHFSSYR) the chain is on the extracellular side. Residues 137-157 (ITWIMYTAYLNVFFLSVCGVL) traverse the membrane as a helical segment. The Cytoplasmic segment spans residues 158–225 (SLLECKLSTS…VQTRHVTWAL (68 aa)). The RVxF motif lies at 219-223 (RHVTW).

Interacts (via RVxF motif) with PPP1CC.

Its subcellular location is the cytoplasmic vesicle. It is found in the secretory vesicle. It localises to the acrosome membrane. Functionally, probably inhibits protein phosphatase 1 (PP1) in sperm via binding to catalytic subunit PPP1CC. In Homo sapiens (Human), this protein is Transmembrane protein 225 (TMEM225).